The sequence spans 217 residues: Large ribosomal subunit protein uL1 (217 aa).

The protein belongs to the universal ribosomal protein uL1 family. In terms of assembly, part of the 50S ribosomal subunit.

Binds directly to 23S rRNA. Probably involved in E site tRNA release. Functionally, protein L1 is also a translational repressor protein, it controls the translation of its operon by binding to its mRNA. The sequence is that of Large ribosomal subunit protein uL1 from Aeropyrum pernix (strain ATCC 700893 / DSM 11879 / JCM 9820 / NBRC 100138 / K1).